The following is a 300-amino-acid chain: 33 kDa chaperonin (300 aa).

2 disulfides stabilise this stretch: Cys-247–Cys-249 and Cys-280–Cys-283.

Belongs to the HSP33 family. Under oxidizing conditions two disulfide bonds are formed involving the reactive cysteines. Under reducing conditions zinc is bound to the reactive cysteines and the protein is inactive.

The protein resides in the cytoplasm. Redox regulated molecular chaperone. Protects both thermally unfolding and oxidatively damaged proteins from irreversible aggregation. Plays an important role in the bacterial defense system toward oxidative stress. This chain is 33 kDa chaperonin, found in Prochlorococcus marinus subsp. pastoris (strain CCMP1986 / NIES-2087 / MED4).